The sequence spans 445 residues: Reticulon-4 receptor-like 1 (445 aa).

The first 24 residues, 1-24 (MLRKGCCVELLLLLLAGELPLGGG), serve as a signal peptide directing secretion. Positions 25–54 (CPRDCVCYPAPMTVSCQAHNFAAIPEGIPE) constitute an LRRNT domain. LRR repeat units lie at residues 55 to 76 (DSER…HFSP), 77 to 98 (AMVT…TFEG), 101 to 123 (HLEE…TFQG), 126 to 147 (KLHA…IFGG), 150 to 171 (SLQY…IFVD), 174 to 195 (NLSH…IFRG), 198 to 219 (NLDR…AFHD), and 222 to 243 (RLTT…CLAP). Positions 255–306 (NAWDCGCRARSLWEWLRRFRGSSSAVPCATPELRQGQDLKLLRVEDFRNCTG) constitute an LRRCT domain. Disordered stretches follow at residues 307 to 377 (PVSP…SGKE) and 401 to 424 (RPKR…QQAS). Basic residues-rich tracts occupy residues 352 to 366 (GYKK…HRNR) and 401 to 413 (RPKR…RRTP). Residue S424 is the site of GPI-anchor amidated serine attachment. Residues 424-444 (SSGTALGAPLLAWILGLAVTL) form a helical membrane-spanning segment. A propeptide spans 425–445 (SGTALGAPLLAWILGLAVTLR) (removed in mature form).

The protein belongs to the Nogo receptor family. Identified in a complex that contains RTN4R, RTN4RL1 and NGFR; the interaction depends on the presence of chondroitin sulfate proteoglycans. Does not interact with MAG, OMG and RTN4. As to expression, detected in brain (at protein level). Detected in retina ganglion cell layer and inner nuclear layer.

Its subcellular location is the cell membrane. It localises to the membrane raft. The protein localises to the perikaryon. The protein resides in the cell projection. Cell surface receptor that plays a functionally redundant role in postnatal brain development and in regulating axon regeneration in the adult central nervous system. Contributes to normal axon migration across the brain midline and normal formation of the corpus callosum. Protects motoneurons against apoptosis; protection against apoptosis is probably mediated by MAG. Plays a role in inhibiting neurite outgrowth and axon regeneration via its binding to neuronal chondroitin sulfate proteoglycans. Binds heparin. Like other family members, plays a role in restricting the number dendritic spines and the number of synapses that are formed during brain development. Signaling mediates activation of Rho and downstream reorganization of the actin cytoskeleton. This is Reticulon-4 receptor-like 1 from Mus musculus (Mouse).